Reading from the N-terminus, the 88-residue chain is Beta-insect excitatory toxin LqhIT1b (88 aa).

A signal peptide spans 1 to 18 (MKFFLLFLVVLPIMGVLG). One can recognise an LCN-type CS-alpha/beta domain in the interval 20 to 83 (KNGYAVDSKG…ISDTTKKYCD (64 aa)). 4 disulfide bridges follow: C34-C55, C40-C60, C44-C62, and C56-C82.

It belongs to the long (4 C-C) scorpion toxin superfamily. Sodium channel inhibitor family. Beta subfamily. As to expression, expressed by the venom gland.

It localises to the secreted. Excitatory insect toxins induce a spastic paralysis. They bind voltage-independently at site-4 of sodium channels (Nav) and shift the voltage of activation toward more negative potentials thereby affecting sodium channel activation and promoting spontaneous and repetitive firing. This is Beta-insect excitatory toxin LqhIT1b from Leiurus hebraeus (Hebrew deathstalker scorpion).